The following is a 618-amino-acid chain: Putative ATP-dependent DNA helicase Q1 (618 aa).

Residues I95–I270 enclose the Helicase ATP-binding domain. Residue L108–S115 participates in ATP binding. The DEVH box signature appears at D214 to H217. A Helicase C-terminal domain is found at C295–S443. Residues C448, C466, C470, and C473 each coordinate Zn(2+). The tract at residues K586–L618 is disordered. Residues S603–L618 are compositionally biased toward acidic residues.

The protein belongs to the helicase family. RecQ subfamily. Zn(2+) is required as a cofactor.

Its subcellular location is the nucleus. The catalysed reaction is Couples ATP hydrolysis with the unwinding of duplex DNA by translocating in the 3'-5' direction.. It carries out the reaction ATP + H2O = ADP + phosphate + H(+). Its function is as follows. DNA helicase that may play a role in the repair of DNA that is damaged by ultraviolet light or other mutagens. Exhibits a magnesium-dependent ATP-dependent DNA-helicase activity that unwinds single- and double-stranded DNA in a 3'-5' direction. This chain is Putative ATP-dependent DNA helicase Q1, found in Caenorhabditis briggsae.